A 370-amino-acid polypeptide reads, in one-letter code: Protein-tyrosine sulfotransferase 1 (370 aa).

Residues 1 to 8 (MVGKLKQN) are Cytoplasmic-facing. A helical; Signal-anchor for type II membrane protein transmembrane segment spans residues 9–25 (LLLACLVISSVTVFYLG). The Lumenal portion of the chain corresponds to 26–370 (QHAMECHHRI…KEKPQTEQVE (345 aa)). Asn60 carries N-linked (GlcNAc...) asparagine glycosylation. 79–83 (RSGTT) lines the 3'-phosphoadenylyl sulfate pocket. Cysteines 97 and 157 form a disulfide. Glu100 acts as the Proton donor/acceptor in catalysis. Residues 102 to 106 (RVIPR) are interaction with peptide substrate. Residues Arg184, Ser192, and Arg196 each contribute to the 3'-phosphoadenylyl sulfate site. Cys226 and Cys234 form a disulfide bridge. Residue Tyr239 participates in 3'-phosphoadenylyl sulfate binding. The N-linked (GlcNAc...) asparagine glycan is linked to Asn262. 3'-phosphoadenylyl sulfate is bound by residues 286–295 (STDQVIKPVN) and Lys301.

It belongs to the protein sulfotransferase family. As to quaternary structure, homodimer. Can also form heterodimers with TPST2. N-glycosylated.

The protein resides in the golgi apparatus membrane. It carries out the reaction L-tyrosyl-[protein] + 3'-phosphoadenylyl sulfate = O-sulfo-L-tyrosine-[protein] + adenosine 3',5'-bisphosphate + H(+). In terms of biological role, catalyzes the O-sulfation of tyrosine residues within acidic motifs of polypeptides, using 3'-phosphoadenylyl sulfate (PAPS) as cosubstrate. This is Protein-tyrosine sulfotransferase 1 (Tpst1) from Rattus norvegicus (Rat).